The chain runs to 275 residues: 4-hydroxy-tetrahydrodipicolinate reductase (275 aa).

NAD(+) contacts are provided by residues 13 to 18 (GAAGKM) and 108 to 110 (GTT). The Proton donor/acceptor role is filled by His164. His165 provides a ligand contact to (S)-2,3,4,5-tetrahydrodipicolinate. Lys168 functions as the Proton donor in the catalytic mechanism. (S)-2,3,4,5-tetrahydrodipicolinate is bound at residue 174–175 (GT).

The protein belongs to the DapB family.

The protein localises to the cytoplasm. The enzyme catalyses (S)-2,3,4,5-tetrahydrodipicolinate + NAD(+) + H2O = (2S,4S)-4-hydroxy-2,3,4,5-tetrahydrodipicolinate + NADH + H(+). It carries out the reaction (S)-2,3,4,5-tetrahydrodipicolinate + NADP(+) + H2O = (2S,4S)-4-hydroxy-2,3,4,5-tetrahydrodipicolinate + NADPH + H(+). It functions in the pathway amino-acid biosynthesis; L-lysine biosynthesis via DAP pathway; (S)-tetrahydrodipicolinate from L-aspartate: step 4/4. Its function is as follows. Catalyzes the conversion of 4-hydroxy-tetrahydrodipicolinate (HTPA) to tetrahydrodipicolinate. This Rippkaea orientalis (strain PCC 8801 / RF-1) (Cyanothece sp. (strain PCC 8801)) protein is 4-hydroxy-tetrahydrodipicolinate reductase.